The sequence spans 117 residues: Large ribosomal subunit protein uL18 (117 aa).

It belongs to the universal ribosomal protein uL18 family. Part of the 50S ribosomal subunit; part of the 5S rRNA/L5/L18/L25 subcomplex. Contacts the 5S and 23S rRNAs.

In terms of biological role, this is one of the proteins that bind and probably mediate the attachment of the 5S RNA into the large ribosomal subunit, where it forms part of the central protuberance. The chain is Large ribosomal subunit protein uL18 from Glaesserella parasuis serovar 5 (strain SH0165) (Haemophilus parasuis).